The chain runs to 330 residues: D-alanine--D-alanine ligase (330 aa).

An ATP-grasp domain is found at 121 to 321 (NHYLKDFGVK…IKDVMTDIIE (201 aa)). 149–204 (VTRLGLPIFVKPNDGGSSFGVTKVKEVSAIQPAIAKAFGEGREVILERFIDGTEVT) lines the ATP pocket. Mg(2+)-binding residues include D275, E288, and N290.

The protein belongs to the D-alanine--D-alanine ligase family. Mg(2+) serves as cofactor. It depends on Mn(2+) as a cofactor.

It is found in the cytoplasm. The catalysed reaction is 2 D-alanine + ATP = D-alanyl-D-alanine + ADP + phosphate + H(+). It participates in cell wall biogenesis; peptidoglycan biosynthesis. Functionally, cell wall formation. This chain is D-alanine--D-alanine ligase, found in Parabacteroides distasonis (strain ATCC 8503 / DSM 20701 / CIP 104284 / JCM 5825 / NCTC 11152).